We begin with the raw amino-acid sequence, 425 residues long: ADP-ribose glycohydrolase MACROD2 (425 aa).

In terms of domain architecture, Macro spans 59–240; that stretch reads QETSQVKKSL…IYKKKMNEFF (182 aa). Substrate-binding positions include 77 to 79, 90 to 92, and 97 to 102; these read GDI, AAN, and GGGGVD. Lys-170 is covalently cross-linked (Glycyl lysine isopeptide (Lys-Gly) (interchain with G-Cter in ubiquitin)). Substrate is bound by residues 185–191 and Phe-224; that span reads ISTGIYG. The interval 243-425 is disordered; sequence DDNNEEEEDV…EAKEQRNGTK (183 aa). Residues 244–262 show a composition bias toward acidic residues; the sequence is DNNEEEEDVEMKEDSDENG. Basic and acidic residues predominate over residues 302-343; sequence EDFAKDENITKGGEVTDHSVRDQDHPDGQENDSTKNEIKIET. Polar residues predominate over residues 344–360; sequence ESQSSYMETEELSSNQE. 2 stretches are compositionally biased toward basic and acidic residues: residues 381 to 391 and 415 to 425; these read EGEKAPGEDTP and DEAKEQRNGTK.

It belongs to the MacroD-type family. MacroD1/2-like subfamily. Interacts with ADP-ribosylated PARP1.

The protein resides in the nucleus. It catalyses the reaction 2''-O-acetyl-ADP-D-ribose + H2O = ADP-D-ribose + acetate + H(+). It carries out the reaction 4-O-(ADP-D-ribosyl)-L-aspartyl-[protein] + H2O = L-aspartyl-[protein] + ADP-D-ribose + H(+). The enzyme catalyses 5-O-(ADP-D-ribosyl)-L-glutamyl-[protein] + H2O = L-glutamyl-[protein] + ADP-D-ribose + H(+). The catalysed reaction is alpha-NAD(+) + H2O = ADP-D-ribose + nicotinamide + H(+). With respect to regulation, subject to product inhibition by ADP-ribose. Its function is as follows. Removes ADP-ribose from aspartate and glutamate residues in proteins bearing a single ADP-ribose moiety. Inactive towards proteins bearing poly-ADP-ribose. Deacetylates O-acetyl-ADP ribose, a signaling molecule generated by the deacetylation of acetylated lysine residues in histones and other proteins. The sequence is that of ADP-ribose glycohydrolase MACROD2 from Homo sapiens (Human).